The primary structure comprises 432 residues: Glutamate-1-semialdehyde 2,1-aminomutase 2 (432 aa).

Lys268 carries the post-translational modification N6-(pyridoxal phosphate)lysine.

Belongs to the class-III pyridoxal-phosphate-dependent aminotransferase family. HemL subfamily. As to quaternary structure, homodimer. Requires pyridoxal 5'-phosphate as cofactor.

It is found in the cytoplasm. The enzyme catalyses (S)-4-amino-5-oxopentanoate = 5-aminolevulinate. The protein operates within porphyrin-containing compound metabolism; protoporphyrin-IX biosynthesis; 5-aminolevulinate from L-glutamyl-tRNA(Glu): step 2/2. The protein is Glutamate-1-semialdehyde 2,1-aminomutase 2 of Listeria monocytogenes serotype 4b (strain CLIP80459).